Here is a 497-residue protein sequence, read N- to C-terminus: Pentatricopeptide repeat-containing protein At2g36240 (497 aa).

PPR repeat units lie at residues 156–186, 192–226, 227–261, 262–296, 297–331, 332–366, 367–401, 402–436, and 437–471; these read LEPI…MKRL, NVGV…RAKP, DVCT…GCEP, NVVS…GCRF, SEAT…RVLP, SEFD…GQTP, CFIA…GILP, DSVT…GYEP, and DETT…DMLP.

This sequence belongs to the PPR family. P subfamily.

This chain is Pentatricopeptide repeat-containing protein At2g36240, found in Arabidopsis thaliana (Mouse-ear cress).